We begin with the raw amino-acid sequence, 549 residues long: Chaperonin GroEL (549 aa).

ATP is bound by residues 30 to 33, Lys-51, 87 to 91, Gly-415, 479 to 481, and Asp-495; these read TLGP, DGTTT, and NAA.

It belongs to the chaperonin (HSP60) family. As to quaternary structure, forms a cylinder of 14 subunits composed of two heptameric rings stacked back-to-back. Interacts with the co-chaperonin GroES.

It localises to the cytoplasm. It carries out the reaction ATP + H2O + a folded polypeptide = ADP + phosphate + an unfolded polypeptide.. In terms of biological role, together with its co-chaperonin GroES, plays an essential role in assisting protein folding. The GroEL-GroES system forms a nano-cage that allows encapsulation of the non-native substrate proteins and provides a physical environment optimized to promote and accelerate protein folding. The polypeptide is Chaperonin GroEL (Stenotrophomonas maltophilia (strain K279a)).